Here is a 135-residue protein sequence, read N- to C-terminus: uncharacterized protein (135 aa).

This is an uncharacterized protein from Homo sapiens (Human).